We begin with the raw amino-acid sequence, 359 residues long: Membrane-bound lytic murein transglycosylase C (359 aa).

The first 16 residues, 1 to 16 (MKKYLALALIAPLLIS), serve as a signal peptide directing secretion. Cysteine 17 carries the N-palmitoyl cysteine lipid modification. Residue cysteine 17 is the site of S-diacylglycerol cysteine attachment.

Belongs to the transglycosylase Slt family.

The protein resides in the cell outer membrane. The catalysed reaction is Exolytic cleavage of the (1-&gt;4)-beta-glycosidic linkage between N-acetylmuramic acid (MurNAc) and N-acetylglucosamine (GlcNAc) residues in peptidoglycan, from either the reducing or the non-reducing ends of the peptidoglycan chains, with concomitant formation of a 1,6-anhydrobond in the MurNAc residue.. Murein-degrading enzyme. May play a role in recycling of muropeptides during cell elongation and/or cell division. This chain is Membrane-bound lytic murein transglycosylase C, found in Shigella flexneri serotype 5b (strain 8401).